An 804-amino-acid polypeptide reads, in one-letter code: Phenylalanine--tRNA ligase beta subunit (804 aa).

The 116-residue stretch at 40–155 (DRGMKGVVIG…SDAPIGADAI (116 aa)) folds into the tRNA-binding domain. In terms of domain architecture, B5 spans 409–484 (QDSVVVTVTL…RLYGYDRLPA (76 aa)). Mg(2+) is bound by residues Asp462, Asp468, Glu471, and Glu472. One can recognise an FDX-ACB domain in the interval 710–803 (PRFPSVVRDI…VEKQFGAVLR (94 aa)).

Belongs to the phenylalanyl-tRNA synthetase beta subunit family. Type 1 subfamily. Tetramer of two alpha and two beta subunits. Mg(2+) serves as cofactor.

Its subcellular location is the cytoplasm. It carries out the reaction tRNA(Phe) + L-phenylalanine + ATP = L-phenylalanyl-tRNA(Phe) + AMP + diphosphate + H(+). This chain is Phenylalanine--tRNA ligase beta subunit, found in Geobacillus kaustophilus (strain HTA426).